The primary structure comprises 198 residues: Na(+)-translocating NADH-quinone reductase subunit E (198 aa).

6 helical membrane passes run 11-31, 35-55, 77-97, 110-130, 140-160, and 176-196; these read AVFI…FLAV, VSPA…AVPV, FLNF…LEMV, GIFL…SFMV, IVYG…LAGL, and LGIT…FSGI.

This sequence belongs to the NqrDE/RnfAE family. As to quaternary structure, composed of six subunits; NqrA, NqrB, NqrC, NqrD, NqrE and NqrF.

It localises to the cell inner membrane. It catalyses the reaction a ubiquinone + n Na(+)(in) + NADH + H(+) = a ubiquinol + n Na(+)(out) + NAD(+). Functionally, NQR complex catalyzes the reduction of ubiquinone-1 to ubiquinol by two successive reactions, coupled with the transport of Na(+) ions from the cytoplasm to the periplasm. NqrA to NqrE are probably involved in the second step, the conversion of ubisemiquinone to ubiquinol. The chain is Na(+)-translocating NADH-quinone reductase subunit E from Haemophilus influenzae (strain ATCC 51907 / DSM 11121 / KW20 / Rd).